The sequence spans 569 residues: Carboxylesterase 3 (569 aa).

The first 24 residues, 1–24, serve as a signal peptide directing secretion; the sequence is MRLHRLRARLNAVAFGLLLLLVHG. A disulfide bridge connects residues cysteine 95 and cysteine 122. N-linked (GlcNAc...) asparagine glycosylation occurs at asparagine 103. Residue serine 227 is the Acyl-ester intermediate of the active site. Cysteine 279 and cysteine 290 are oxidised to a cystine. Catalysis depends on charge relay system residues glutamate 345 and histidine 458. Positions 566–569 match the Prevents secretion from ER motif; that stretch reads QEDL.

The protein belongs to the type-B carboxylesterase/lipase family. In terms of processing, N-glycosylated.

The protein localises to the endoplasmic reticulum lumen. The enzyme catalyses a carboxylic ester + H2O = an alcohol + a carboxylate + H(+). Its function is as follows. Involved in the detoxification of xenobiotics and in the activation of ester and amide prodrugs. This chain is Carboxylesterase 3 (CES3), found in Pongo abelii (Sumatran orangutan).